Here is a 42-residue protein sequence, read N- to C-terminus: YKRCHIKGGHCFPKEKLICIPPSSDIGKMDCPWKRKCCKKRS.

Intrachain disulfides connect Cys-4–Cys-37, Cys-11–Cys-31, and Cys-19–Cys-38.

The protein belongs to the crotamine-myotoxin family. Monomer. Expressed by the venom gland.

It localises to the secreted. Functionally, cationic peptide that possesses multiple functions. It acts as a cell-penetrating peptide (CPP), and as a potent voltage-gated potassium channel (Kv) inhibitor. It exhibits antimicrobial activities, and hind limb paralysis. It also induces potent blockade of neuromuscular transmission in young chicken biventer cervicis preparation and potent myotoxic effect. In vivo, induces myonecrosis, upon intramuscular or subcutaneous injections into mice. The protein is Crotamine-IV-2 of Crotalus durissus cumanensis (South American rattlesnake).